We begin with the raw amino-acid sequence, 232 residues long: Protein TIFY 10c (232 aa).

The tract at residues 54 to 73 is disordered; sequence PPAAGAGGAFRPPPTTMNLL. Residues 114 to 149 enclose the Tify domain; it reads AGEKAQQLTIFYGGKVVVFENFPSTKVKDLLQIVST. A disordered region spans residues 151 to 176; sequence DGVDKNTGTAATQSLPRPAHNSLPDL. Residues 156-165 show a composition bias toward polar residues; sequence NTGTAATQSL. The Jas signature appears at 177 to 202; that stretch reads PIARRNSLHRFLEKRKGRMNANAPYQ. A Nuclear localization signal motif is present at residues 179 to 186; sequence ARRNSLHR.

Belongs to the TIFY/JAZ family. As to quaternary structure, interacts with BHLH148. Interacts with COI1B in a coronatine-dependent manner. Coronatine is an analog of jasmonoyl isoleucine (JA-Ile). Interacts with TIFY5/JAZ2, TIFY6B/JAZ4, TIFY9/JAZ5, TIFY11A, TIFY11D/JAZ12 and TIFY11G/JAZ15. Post-translationally, ubiquitinated. Increase in jasmonoyl isoleucine (JA-Ile) levels mediates its degradation via COI1B-mediated proteasome pathway.

It localises to the nucleus. The protein localises to the cytoplasm. It is found in the cytosol. Functionally, repressor of jasmonate (JA) responses. Acts as a repressor of JA-induced resistance to the bacterial blight pathogen Xanthomonas oryzae pv. oryzae (Xoo). Regulates JA-induced accumulation of linalool at the transcriptional level of linalool synthase gene LIS. Linalool is important for resistance to bacterial blight pathogen Xoo. This is Protein TIFY 10c from Oryza sativa subsp. indica (Rice).